Consider the following 199-residue polypeptide: Ribonuclease HII (199 aa).

Residues 13-199 (GLVAGVDEVG…FAPIAKILCG (187 aa)) form the RNase H type-2 domain. A divalent metal cation-binding residues include Asp19, Glu20, and Asp110.

The protein belongs to the RNase HII family. Mn(2+) serves as cofactor. Mg(2+) is required as a cofactor.

It is found in the cytoplasm. The enzyme catalyses Endonucleolytic cleavage to 5'-phosphomonoester.. In terms of biological role, endonuclease that specifically degrades the RNA of RNA-DNA hybrids. The polypeptide is Ribonuclease HII (Jannaschia sp. (strain CCS1)).